We begin with the raw amino-acid sequence, 341 residues long: Glyceraldehyde-3-phosphate dehydrogenase 2 (341 aa).

Residues 12-13 (RI), Arg-78, and Thr-120 each bind NAD(+). D-glyceraldehyde 3-phosphate contacts are provided by residues 152–154 (SCT) and Thr-183. Cys-153 (nucleophile) is an active-site residue. Asn-184 contributes to the NAD(+) binding site. Residues Arg-198, 211-212 (TG), and Arg-234 each bind D-glyceraldehyde 3-phosphate. An NAD(+)-binding site is contributed by Asn-313.

This sequence belongs to the glyceraldehyde-3-phosphate dehydrogenase family. Homotetramer.

The protein resides in the cytoplasm. It catalyses the reaction D-glyceraldehyde 3-phosphate + phosphate + NAD(+) = (2R)-3-phospho-glyceroyl phosphate + NADH + H(+). It functions in the pathway carbohydrate degradation; glycolysis; pyruvate from D-glyceraldehyde 3-phosphate: step 1/5. Functionally, catalyzes the oxidative phosphorylation of glyceraldehyde 3-phosphate (G3P) to 1,3-bisphosphoglycerate (BPG) using the cofactor NAD. The first reaction step involves the formation of a hemiacetal intermediate between G3P and a cysteine residue, and this hemiacetal intermediate is then oxidized to a thioester, with concomitant reduction of NAD to NADH. The reduced NADH is then exchanged with the second NAD, and the thioester is attacked by a nucleophilic inorganic phosphate to produce BPG. The sequence is that of Glyceraldehyde-3-phosphate dehydrogenase 2 (gapA2) from Staphylococcus epidermidis (strain ATCC 35984 / DSM 28319 / BCRC 17069 / CCUG 31568 / BM 3577 / RP62A).